An 858-amino-acid chain; its full sequence is Putative glutamate--cysteine ligase 2-3 (858 aa).

The interval 1-372 (MSDARNVAVG…RDVPPAGASL (372 aa)) is carboxylate-amine ligase. The tract at residues 373-858 (GVAPAVSAPD…GSKDTWIPRR (486 aa)) is unknown.

It in the N-terminal section; belongs to the glutamate--cysteine ligase type 2 family. YbdK subfamily.

The catalysed reaction is L-cysteine + L-glutamate + ATP = gamma-L-glutamyl-L-cysteine + ADP + phosphate + H(+). In terms of biological role, ATP-dependent carboxylate-amine ligase which exhibits weak glutamate--cysteine ligase activity. The sequence is that of Putative glutamate--cysteine ligase 2-3 from Frankia alni (strain DSM 45986 / CECT 9034 / ACN14a).